The primary structure comprises 398 residues: 2-epi-5-epi-valiolone synthase (398 aa).

Residues Asp62, 93–96 (ETVK), 126–130 (GVLMD), 150–151 (TT), Lys163, Lys172, and 190–193 (FLAT) each bind NAD(+). The active site involves Lys163. 3 residues coordinate a divalent metal cation: Glu205, His276, and His292.

Belongs to the sugar phosphate cyclases superfamily. EEVS family. The cofactor is NAD(+). It depends on Co(2+) as a cofactor.

The catalysed reaction is D-sedoheptulose 7-phosphate = 2-epi-5-epi-valiolone + phosphate. In terms of biological role, catalyzes the cyclization of D-sedoheptulose 7-phosphate to 2-epi-5-epi-valiolone. Does not use ido-heptulose 7-phosphate and 3-deoxy-arabino-heptulosonate 7-phosphate. Involved in the biosynthesis of the acarviose moiety of the alpha-glucosidase inhibitor acarbose. In Actinoplanes sp. (strain ATCC 31044 / CBS 674.73 / SE50/110), this protein is 2-epi-5-epi-valiolone synthase.